The sequence spans 638 residues: Neuroendocrine convertase 2 (638 aa).

A signal peptide spans 1–25 (MKGGCVSQWKAAAGLLFCVTVFASA). Positions 26 to 109 (ERPVFTNHFL…QQEGFDRKKR (84 aa)) are excised as a propeptide. The 325-residue stretch at 129 to 453 (QWYLINTGQA…YGVLDAGAMV (325 aa)) folds into the Peptidase S8 domain. Residues Asp-167 and His-208 each act as charge relay system in the active site. 2 disulfides stabilise this stretch: Cys-225/Cys-376 and Cys-317/Cys-347. The N-linked (GlcNAc...) asparagine glycan is linked to Asn-375. Ser-384 (charge relay system) is an active-site residue. The 137-residue stretch at 461 to 597 (TVPERFHCVG…TLMLHGSQSA (137 aa)) folds into the P/Homo B domain. A disulfide bond links Cys-468 and Cys-494. N-linked (GlcNAc...) asparagine glycans are attached at residues Asn-514 and Asn-524.

This sequence belongs to the peptidase S8 family. Furin subfamily.

The protein localises to the cytoplasmic vesicle. The protein resides in the secretory vesicle. It is found in the secreted. The catalysed reaction is Release of protein hormones and neuropeptides from their precursors, generally by hydrolysis of -Lys-Arg-|- bonds.. Its function is as follows. Serine endopeptidase which is involved in the processing of hormone and other protein precursors at sites comprised of pairs of basic amino acid residues. Responsible for the release of glucagon from proglucagon in pancreatic A cells. This is Neuroendocrine convertase 2 (PCSK2) from Sus scrofa (Pig).